The following is an 87-amino-acid chain: MSGTFSWTHLLIIALLFVVLFGAKRLPDAARGLGRSLRIFKSEVNQMQHETPQANAAPVQQPAQQLPPAQPAQAPAQPVNQAEQKSA.

Residues 3 to 23 form a helical membrane-spanning segment; it reads GTFSWTHLLIIALLFVVLFGA. Residues 47 to 87 are disordered; it reads MQHETPQANAAPVQQPAQQLPPAQPAQAPAQPVNQAEQKSA. Over residues 52–87 the composition is skewed to low complexity; the sequence is PQANAAPVQQPAQQLPPAQPAQAPAQPVNQAEQKSA.

It belongs to the TatA/E family. In terms of assembly, the Tat system comprises two distinct complexes: a TatABC complex, containing multiple copies of TatA, TatB and TatC subunits, and a separate TatA complex, containing only TatA subunits. Substrates initially bind to the TatABC complex, which probably triggers association of the separate TatA complex to form the active translocon.

The protein resides in the cell membrane. Functionally, part of the twin-arginine translocation (Tat) system that transports large folded proteins containing a characteristic twin-arginine motif in their signal peptide across membranes. TatA could form the protein-conducting channel of the Tat system. The chain is Sec-independent protein translocase protein TatA from Nocardia farcinica (strain IFM 10152).